A 243-amino-acid polypeptide reads, in one-letter code: Probable transcriptional regulatory protein BDI_1233 (243 aa).

The protein belongs to the TACO1 family.

The protein localises to the cytoplasm. The polypeptide is Probable transcriptional regulatory protein BDI_1233 (Parabacteroides distasonis (strain ATCC 8503 / DSM 20701 / CIP 104284 / JCM 5825 / NCTC 11152)).